The primary structure comprises 232 residues: 2,3-bisphosphoglycerate-dependent phosphoglycerate mutase (232 aa).

Residues 10–17 (RHGESQWN), 23–24 (TG), arginine 62, 89–92 (ERHY), lysine 100, 116–117 (RR), and 186–187 (GN) each bind substrate. The Tele-phosphohistidine intermediate role is filled by histidine 11. Catalysis depends on glutamate 89, which acts as the Proton donor/acceptor.

Belongs to the phosphoglycerate mutase family. BPG-dependent PGAM subfamily. Homodimer.

The enzyme catalyses (2R)-2-phosphoglycerate = (2R)-3-phosphoglycerate. It participates in carbohydrate degradation; glycolysis; pyruvate from D-glyceraldehyde 3-phosphate: step 3/5. Functionally, catalyzes the interconversion of 2-phosphoglycerate and 3-phosphoglycerate. The polypeptide is 2,3-bisphosphoglycerate-dependent phosphoglycerate mutase (Blochmanniella pennsylvanica (strain BPEN)).